We begin with the raw amino-acid sequence, 149 residues long: Transcriptional regulator MraZ (149 aa).

SpoVT-AbrB domains lie at 7 to 54 (KYIN…GIAH) and 83 to 126 (AVQL…QPQN).

This sequence belongs to the MraZ family. As to quaternary structure, forms oligomers.

It is found in the cytoplasm. Its subcellular location is the nucleoid. This is Transcriptional regulator MraZ from Rickettsia typhi (strain ATCC VR-144 / Wilmington).